The following is a 551-amino-acid chain: Putative transport protein HI_0035 (551 aa).

5 helical membrane-spanning segments follow: residues 4–24 (IAIT…IGHW), 28–48 (GVGL…HFTN), 65–85 (FGLI…FFSS), 95–115 (AFAI…HKIA), and 157–177 (VSYA…MWLI). RCK C-terminal domains are found at residues 191 to 275 (RFNA…IIGH) and 277 to 360 (VDAP…VIGN). A run of 6 helical transmembrane segments spans residues 370–390 (MLPV…PFYI), 402–424 (AGGP…LYWF), 438–458 (IVLF…DTLV), 463–483 (LEWM…VGTI), 492–512 (YLTI…LAFA), and 529–549 (VYPL…VLLW).

It belongs to the AAE transporter (TC 2.A.81) family. YidE subfamily.

It localises to the cell membrane. The chain is Putative transport protein HI_0035 from Haemophilus influenzae (strain ATCC 51907 / DSM 11121 / KW20 / Rd).